The primary structure comprises 307 residues: Atrochrysone carboxyl ACP thioesterase (307 aa).

Zn(2+) is bound by residues His-104, His-106, Asp-108, and His-109. The Proton donor/acceptor role is filled by Asp-108.

This sequence belongs to the metallo-beta-lactamase superfamily. It depends on Zn(2+) as a cofactor.

The enzyme catalyses atrochrysone carboxyl-[ACP] + H2O = atrochrysone carboxylate + holo-[ACP] + H(+). It functions in the pathway secondary metabolite biosynthesis. Atrochrysone carboxyl ACP thioesterase; part of the gene cluster that mediates the biosynthesis of monodictyphenone, a prenyl xanthone derivative. The pathway begins with the synthesis of atrochrysone thioester by the polyketide synthase (PKS) mdpG. The atrochrysone carboxyl ACP thioesterase mdpF then breaks the thioester bond and releases the atrochrysone carboxylic acid from mdpG. The atrochrysone carboxylic acid is then converted to atrochrysone which is further transformed into emodin anthrone. The next step is performed by the anthrone oxygenase mdpH that catalyzes the oxidation of emodinanthrone to emodin. Emodin is further modified to yield monodictyphenone via several steps involving mdpB, mdpC mdpJ, mdpK and mdpL. The short chain dehydrogenase mdpC converts the tautomers of emodin hydroquinone into the 3-hydroxy-3,4-dihydroan-thracen-1(2H)-one derivative. These enzymes with xptA, xptB and xptC are also proposed to be involved in the synthesis of shamixanthone from emodin. Especially, direct reduction of emodin by the short chain dehydrogenase mdpC followed by dehydration catalyzed by the scytalone dehydratase-like protein mdpB gives loss of oxygen and formation of chrysophanol intermediate in two simple steps. In Emericella nidulans (strain FGSC A4 / ATCC 38163 / CBS 112.46 / NRRL 194 / M139) (Aspergillus nidulans), this protein is Atrochrysone carboxyl ACP thioesterase.